The sequence spans 321 residues: Dolichyl N-acetyl-alpha-D-glucosaminyl phosphate 3-beta-D-2,3-diacetamido-2,3-dideoxy-beta-D-glucuronosyltransferase (321 aa).

2 helical membrane passes run 252–272 and 290–310; these read FGFL…FIYI and LYIA…YGFF.

Belongs to the glycosyltransferase 2 family.

The protein localises to the cell membrane. It carries out the reaction an archaeal dolichyl N-acetyl-alpha-D-glucosaminyl phosphate + UDP-2,3-diacetamido-2,3-dideoxy-alpha-D-glucuronate = an archaeal dolichyl 3-O-(2,3-diacetamido-2,3-dideoxy- beta-D-glucuronosyl)-N-acetyl- alpha-D-glucosaminyl phosphate + UDP + H(+). It participates in cell surface structure biogenesis; S-layer biogenesis. Its pathway is protein modification; protein glycosylation. Involved in the assembly of an N-linked disaccharide that decorates the S-layer glycoprotein and flagellins. AglC catalyzes the transfer of 2,3-diacetamido-2,3-dideoxy-alpha-D-glucuronic acid (Glc-2,3-diNAcA) from uridine 5'-diphospho 2,3-diacetamido-2,3-dideoxy-alpha-D-glucuronic acid (UDP-Glc-2,3-diNAcA) to the AglK product Dol-P-GlcNAc to yield Dol-P-GlcNAc-Glc-2,3-diNAcA. AglC is specific for the monophosphate-linked Dol-P-GlcNAc. This is Dolichyl N-acetyl-alpha-D-glucosaminyl phosphate 3-beta-D-2,3-diacetamido-2,3-dideoxy-beta-D-glucuronosyltransferase from Methanococcus voltae.